We begin with the raw amino-acid sequence, 320 residues long: MAFAKISQVAHYAPAQVVTNDDLSKIMDTSDEWIRSRTGIQERRISLNENTSDLATNVAYQLLEKSGLSPEELDFVLVATISPDNSMPSVAARVQGTIGAVNAFAFDITAACSGFVFALATAEKLIKSGAYKKGLVIGAEVLSKTLDWSDRATAVLFGDGAGGVLLEESEEEHFFGESLNTDGSKGGLESGASAVISPYSDGTEQPNPYMQMDGKAIFDFAVKTVSKSIKALVEEKGEPDYFLLHQANIRILDTMAKKIDVSRDKFLANMMSYGNTSAASIPILLSENVANETLKLGSDQTILLSGFGGGLTWGSLIVKI.

Residues C112 and H245 contribute to the active site. Residues 246 to 250 (QANIR) are ACP-binding. N275 is a catalytic residue.

Belongs to the thiolase-like superfamily. FabH family. Homodimer.

It localises to the cytoplasm. It catalyses the reaction malonyl-[ACP] + acetyl-CoA + H(+) = 3-oxobutanoyl-[ACP] + CO2 + CoA. The protein operates within lipid metabolism; fatty acid biosynthesis. Catalyzes the condensation reaction of fatty acid synthesis by the addition to an acyl acceptor of two carbons from malonyl-ACP. Catalyzes the first condensation reaction which initiates fatty acid synthesis and may therefore play a role in governing the total rate of fatty acid production. Possesses both acetoacetyl-ACP synthase and acetyl transacylase activities. Its substrate specificity determines the biosynthesis of branched-chain and/or straight-chain of fatty acids. This Streptococcus thermophilus (strain CNRZ 1066) protein is Beta-ketoacyl-[acyl-carrier-protein] synthase III.